Here is a 65-residue protein sequence, read N- to C-terminus: Protein MalX (65 aa).

The polypeptide is Protein MalX (malX) (Klebsiella pneumoniae).